The chain runs to 131 residues: ER membrane protein complex subunit 5 (131 aa).

Over M1–P3 the chain is Cytoplasmic. Residues S4–F22 traverse the membrane as a helical segment. At S23–I43 the chain is on the lumenal side. A helical membrane pass occupies residues D44–I63. Topologically, residues A64–R131 are cytoplasmic. Phosphoserine is present on S120.

Belongs to the membrane magnesium transporter (TC 1.A.67) family. As to quaternary structure, component of the ER membrane protein complex (EMC). Abundant in heart muscle and kidney with lower levels in liver and brain and very little expression in intestine or colon. In kidney, highest levels in distal convoluted tubule.

The protein resides in the endoplasmic reticulum membrane. Its subcellular location is the golgi apparatus membrane. It localises to the early endosome membrane. In terms of biological role, part of the endoplasmic reticulum membrane protein complex (EMC) that enables the energy-independent insertion into endoplasmic reticulum membranes of newly synthesized membrane proteins. Preferentially accommodates proteins with transmembrane domains that are weakly hydrophobic or contain destabilizing features such as charged and aromatic residues. Involved in the cotranslational insertion of multi-pass membrane proteins in which stop-transfer membrane-anchor sequences become ER membrane spanning helices. It is also required for the post-translational insertion of tail-anchored/TA proteins in endoplasmic reticulum membranes. By mediating the proper cotranslational insertion of N-terminal transmembrane domains in an N-exo topology, with translocated N-terminus in the lumen of the ER, controls the topology of multi-pass membrane proteins like the G protein-coupled receptors. By regulating the insertion of various proteins in membranes, it is indirectly involved in many cellular processes. May be involved Mg(2+) transport. The polypeptide is ER membrane protein complex subunit 5 (Mus musculus (Mouse)).